The primary structure comprises 166 residues: NADH-quinone oxidoreductase subunit A (166 aa).

3 helical membrane-spanning segments follow: residues 16–36 (FAVF…GAYF), 68–88 (FYLV…LYAW), and 98–118 (IGFI…FYLV). The tract at residues 141–166 (RYASSHPQDISQELSVAGSQQANESR) is disordered.

It belongs to the complex I subunit 3 family. NDH-1 is composed of 13 different subunits. Subunits NuoA, H, J, K, L, M, N constitute the membrane sector of the complex.

The protein resides in the cell inner membrane. The catalysed reaction is a quinone + NADH + 5 H(+)(in) = a quinol + NAD(+) + 4 H(+)(out). NDH-1 shuttles electrons from NADH, via FMN and iron-sulfur (Fe-S) centers, to quinones in the respiratory chain. The immediate electron acceptor for the enzyme in this species is believed to be ubiquinone. Couples the redox reaction to proton translocation (for every two electrons transferred, four hydrogen ions are translocated across the cytoplasmic membrane), and thus conserves the redox energy in a proton gradient. The chain is NADH-quinone oxidoreductase subunit A from Yersinia pseudotuberculosis serotype IB (strain PB1/+).